The sequence spans 96 residues: Co-chaperonin GroES (96 aa).

The protein belongs to the GroES chaperonin family. As to quaternary structure, heptamer of 7 subunits arranged in a ring. Interacts with the chaperonin GroEL.

It is found in the cytoplasm. Its function is as follows. Together with the chaperonin GroEL, plays an essential role in assisting protein folding. The GroEL-GroES system forms a nano-cage that allows encapsulation of the non-native substrate proteins and provides a physical environment optimized to promote and accelerate protein folding. GroES binds to the apical surface of the GroEL ring, thereby capping the opening of the GroEL channel. This Cupriavidus necator (strain ATCC 17699 / DSM 428 / KCTC 22496 / NCIMB 10442 / H16 / Stanier 337) (Ralstonia eutropha) protein is Co-chaperonin GroES.